Reading from the N-terminus, the 483-residue chain is Glutamyl-tRNA(Gln) amidotransferase subunit A (483 aa).

Residues Lys-76 and Ser-151 each act as charge relay system in the active site. Ser-175 functions as the Acyl-ester intermediate in the catalytic mechanism.

This sequence belongs to the amidase family. GatA subfamily. As to quaternary structure, heterotrimer of A, B and C subunits.

The enzyme catalyses L-glutamyl-tRNA(Gln) + L-glutamine + ATP + H2O = L-glutaminyl-tRNA(Gln) + L-glutamate + ADP + phosphate + H(+). Functionally, allows the formation of correctly charged Gln-tRNA(Gln) through the transamidation of misacylated Glu-tRNA(Gln) in organisms which lack glutaminyl-tRNA synthetase. The reaction takes place in the presence of glutamine and ATP through an activated gamma-phospho-Glu-tRNA(Gln). The protein is Glutamyl-tRNA(Gln) amidotransferase subunit A of Pseudomonas putida (strain W619).